The following is a 480-amino-acid chain: Adenosylhomocysteinase (480 aa).

Substrate is bound by residues T63, D142, and E203. NAD(+) is bound at residue 204–206 (TTT). Positions 233 and 237 each coordinate substrate. NAD(+) is bound by residues N238, 267-272 (GYGDVG), E290, N325, 346-348 (IGH), and N394.

Belongs to the adenosylhomocysteinase family. The cofactor is NAD(+).

The protein localises to the cytoplasm. It catalyses the reaction S-adenosyl-L-homocysteine + H2O = L-homocysteine + adenosine. It functions in the pathway amino-acid biosynthesis; L-homocysteine biosynthesis; L-homocysteine from S-adenosyl-L-homocysteine: step 1/1. May play a key role in the regulation of the intracellular concentration of adenosylhomocysteine. This is Adenosylhomocysteinase from Xylella fastidiosa (strain M12).